The primary structure comprises 291 residues: uncharacterized protein (291 aa).

Residues 5 to 19 (AFIGLGVMGFPMAGH) and T97 contribute to the NAD(+) site. K172 is a catalytic residue. NAD(+) is bound at residue K240.

The protein belongs to the HIBADH-related family.

This is an uncharacterized protein from Shewanella frigidimarina (strain NCIMB 400).